Consider the following 200-residue polypeptide: Recombination protein RecR (200 aa).

A C4-type zinc finger spans residues 57 to 72; it reads CDSCQNFSDTEICQIC. The region spanning 80–175 is the Toprim domain; it reads GTLCVVESPS…LITRLAHGIP (96 aa).

This sequence belongs to the RecR family.

In terms of biological role, may play a role in DNA repair. It seems to be involved in an RecBC-independent recombinational process of DNA repair. It may act with RecF and RecO. This is Recombination protein RecR from Marinobacter nauticus (strain ATCC 700491 / DSM 11845 / VT8) (Marinobacter aquaeolei).